Reading from the N-terminus, the 150-residue chain is Photosystem I reaction center subunit XI (150 aa).

Residues 1 to 72 (MSDFIQSYNN…DKLGPLRNTD (72 aa)) are Stromal-facing. A helical membrane pass occupies residues 73–93 (VALLSGFLSAVGLIIILTVCL). Residues 94–118 (SMYGNVSFDKDDAKDLLQTTEGWGQ) are Lumenal-facing. A helical transmembrane segment spans residues 119 to 139 (FTAGFLVGAVGGSGFAYLLLA). Over 140-150 (NIPVLQNLGLS) the chain is Stromal.

This sequence belongs to the PsaL family.

The protein resides in the plastid. It is found in the chloroplast thylakoid membrane. In Gracilaria tenuistipitata var. liui (Red alga), this protein is Photosystem I reaction center subunit XI.